A 342-amino-acid polypeptide reads, in one-letter code: Nucleoid-associated protein Sbal223_1817 (342 aa).

Belongs to the YejK family.

The protein resides in the cytoplasm. Its subcellular location is the nucleoid. In Shewanella baltica (strain OS223), this protein is Nucleoid-associated protein Sbal223_1817.